The sequence spans 52 residues: Large ribosomal subunit protein bL32c (52 aa).

The protein belongs to the bacterial ribosomal protein bL32 family.

Its subcellular location is the plastid. The protein resides in the chloroplast. The chain is Large ribosomal subunit protein bL32c from Arabis hirsuta (Hairy rock-cress).